A 202-amino-acid chain; its full sequence is Superoxide dismutase [Mn] (202 aa).

H27 lines the Mn(2+) pocket. A phosphothreonine mark is found at T34 and T70. Residues H82, D164, and H168 each contribute to the Mn(2+) site.

Belongs to the iron/manganese superoxide dismutase family. As to quaternary structure, homodimer; under aerobic conditions. Under anaerobic conditions it is a component of the so-called 'green protein' complex (GPC), which consists of at least two components, SodA and a nucleoside diphosphate kinase (NDK). Mn(2+) is required as a cofactor.

Its subcellular location is the cytoplasm. It catalyses the reaction 2 superoxide + 2 H(+) = H2O2 + O2. Its function is as follows. Destroys superoxide anion radicals which are normally produced within the cells and which are toxic to biological systems. Active only in homodimeric state. The protein is Superoxide dismutase [Mn] (sodA) of Virgibacillus halodenitrificans (Bacillus halodenitrificans).